Here is a 262-residue protein sequence, read N- to C-terminus: Probable lipoprotein EnvF (262 aa).

Positions 1–25 (MNKIHVTYKNLLLPITFIAATLISA) are cleaved as a signal peptide. A lipid anchor (N-palmitoyl cysteine) is attached at cysteine 26. A lipid anchor (S-diacylglycerol cysteine) is attached at cysteine 26. The segment at 227–262 (EAEKAQQLVEQSRKDIESQRKKAAGKMNEIQQTFKK) is disordered. Over residues 237-246 (QSRKDIESQR) the composition is skewed to basic and acidic residues.

It is found in the cell membrane. The sequence is that of Probable lipoprotein EnvF (envF) from Salmonella typhimurium (strain LT2 / SGSC1412 / ATCC 700720).